The primary structure comprises 432 residues: D-amino acid dehydrogenase (432 aa).

Residue Val-3–Tyr-17 coordinates FAD.

The protein belongs to the DadA oxidoreductase family. FAD is required as a cofactor.

The catalysed reaction is a D-alpha-amino acid + A + H2O = a 2-oxocarboxylate + AH2 + NH4(+). Its pathway is amino-acid degradation; D-alanine degradation; NH(3) and pyruvate from D-alanine: step 1/1. Functionally, oxidative deamination of D-amino acids. This Stutzerimonas stutzeri (strain A1501) (Pseudomonas stutzeri) protein is D-amino acid dehydrogenase.